The primary structure comprises 363 residues: RNA polymerase I-specific transcription initiation factor RRN5 (363 aa).

The segment at 301–344 is disordered; the sequence is LSRRDAPPVHQDENQENQENQENQEQDNTASEGESEAERDEIDE. Over residues 302–313 the composition is skewed to basic and acidic residues; the sequence is SRRDAPPVHQDE. The span at 317-328 shows a compositional bias: low complexity; it reads NQENQENQEQDN. Over residues 333–344 the composition is skewed to acidic residues; that stretch reads GESEAERDEIDE.

In terms of assembly, component of the UAF (upstream activation factor) complex which consists of UAF30, RRN5, RRN9, RRN10, and histones H3 and H4.

The protein resides in the nucleus. It is found in the nucleolus. In terms of biological role, component of the UAF (upstream activation factor) complex which interacts with the upstream element of the RNA polymerase I promoter and forms a stable preinitiation complex. Together with SPT15/TBP UAF seems to stimulate basal transcription to a fully activated level. This chain is RNA polymerase I-specific transcription initiation factor RRN5 (RRN5), found in Saccharomyces cerevisiae (strain ATCC 204508 / S288c) (Baker's yeast).